Consider the following 198-residue polypeptide: Regulation of enolase protein 1 (198 aa).

The protein localises to the cytoplasm. Functionally, functions in the galactose metabolic pathway via the GAL83 protein and that it may control the level of ENO1. The sequence is that of Regulation of enolase protein 1 (REE1) from Saccharomyces cerevisiae (strain ATCC 204508 / S288c) (Baker's yeast).